A 684-amino-acid chain; its full sequence is Glycine--tRNA ligase beta subunit (684 aa).

Belongs to the class-II aminoacyl-tRNA synthetase family. As to quaternary structure, tetramer of two alpha and two beta subunits.

It localises to the cytoplasm. The catalysed reaction is tRNA(Gly) + glycine + ATP = glycyl-tRNA(Gly) + AMP + diphosphate. This is Glycine--tRNA ligase beta subunit from Stutzerimonas stutzeri (strain A1501) (Pseudomonas stutzeri).